The sequence spans 379 residues: Tubby-like F-box protein 7 (379 aa).

Residues 18 to 28 (FHQGETTTAPE) are compositionally biased toward polar residues. The tract at residues 18–41 (FHQGETTTAPESESIPPPSNMAGS) is disordered. The 56-residue stretch at 42–97 (SSWSAMLPELLGEIIRRVEETEDRWPQRRDVVTCACVSKKWREITHDFARSSLNSG) folds into the F-box domain. Disordered stretches follow at residues 193 to 212 (SQPPHNGAKPSNGKASRRFA) and 248 to 278 (TLRCPSPSPSSSSAGLSSDQKPCDVTKIMKK).

This sequence belongs to the TUB family. As to expression, ubiquitous.

The chain is Tubby-like F-box protein 7 from Arabidopsis thaliana (Mouse-ear cress).